The following is a 426-amino-acid chain: Glutamyl-tRNA reductase (426 aa).

Residues Thr-49–Arg-52, Ser-101, Glu-106–Gln-108, and Gln-112 each bind substrate. Cys-50 serves as the catalytic Nucleophile. An NADP(+)-binding site is contributed by Gly-181–Ile-186. A disordered region spans residues Arg-405–Arg-426.

The protein belongs to the glutamyl-tRNA reductase family. In terms of assembly, homodimer.

It carries out the reaction (S)-4-amino-5-oxopentanoate + tRNA(Glu) + NADP(+) = L-glutamyl-tRNA(Glu) + NADPH + H(+). It participates in porphyrin-containing compound metabolism; protoporphyrin-IX biosynthesis; 5-aminolevulinate from L-glutamyl-tRNA(Glu): step 1/2. Catalyzes the NADPH-dependent reduction of glutamyl-tRNA(Glu) to glutamate 1-semialdehyde (GSA). This is Glutamyl-tRNA reductase from Xanthomonas axonopodis pv. citri (strain 306).